We begin with the raw amino-acid sequence, 602 residues long: MAQAWAFLLLPVLLLSSYASHRLFPSYITGPLCGSTTTSSSSSSGVRSFLCSQQDSQTPSPASTMYKTAFHFQPAKNWINDPSGPMYFNGFYHEFYQYNLNGPTFGDIVWGHSVSTDLVNWIGLEPALVRDTPSDIDGCWTGSVTILPGGQPVIIYTGGDIEKHQAQNIAFPKNRSDPYLREWTKVINNPVLLPNEPGMNSIEFRDPTTGWIGPDGHWRMAVGAEWHGYSAALLYKSEDFLNWTMVDHPLYSHNGTNMWECPDFYAVLPGNNGGLDLSAAIPQGAKHALKMSVDSVDKYMIGVYDLERDAFVPDVVLDDHRLWLRIDYGTFYASKSFYDSKKGRRVIWGWSRETDSPSDDLEKGWAGLHTIPRTIWLDGDGKQLLQWPVDEIESLRTNEINHQGLELNKGDLFEIKGVDTFQADVEIDFELPSLDDAEPFDPSWLLDPEMHCGEAGASVQGGIGPFGLVILASNDMNEHTEVYFRVYKSQEKGMVLMCSDLRRSSLRPGLETPAYGGFFELDLAKEKKISLRTLIDRSAVESFGGGGRVCITSRVYPAVLADGGSAHMYAFNNGNAIVKVPQLRAWTMRKAQVNVEMGWSAI.

The N-terminal stretch at 1-19 (MAQAWAFLLLPVLLLSSYA) is a signal peptide. Asp-81 is a catalytic residue. N-linked (GlcNAc...) asparagine glycosylation is found at Asn-174, Asn-242, and Asn-254. Cys-452 and Cys-498 are joined by a disulfide.

The protein belongs to the glycosyl hydrolase 32 family. In terms of tissue distribution, detected in leaves, with maximum levels at the leaf tip.

It carries out the reaction Hydrolysis of terminal, non-reducing (2-&gt;1)-linked beta-D-fructofuranose residues in fructans.. With respect to regulation, inhibited by sucrose. Functionally, hydrolyzes inulin-type beta-(2,1)-fructans. Has low activity against beta-(2,6)-linked fructans. May play a role as a beta-(2,1)-trimmer during graminan biosynthesis. The protein is Fructan 1-exohydrolase of Bromus pictus (Patagonian grass).